Reading from the N-terminus, the 87-residue chain is Translation initiation factor IF-1 2 (87 aa).

The 72-residue stretch at 1-72 (MAKEELLELD…TKGRINFRHK (72 aa)) folds into the S1-like domain. Residues 68 to 87 (NFRHKDANSPRPPRSGQPRR) are disordered. A compositionally biased stretch (pro residues) spans 77–87 (PRPPRSGQPRR).

This sequence belongs to the IF-1 family. As to quaternary structure, component of the 30S ribosomal translation pre-initiation complex which assembles on the 30S ribosome in the order IF-2 and IF-3, IF-1 and N-formylmethionyl-tRNA(fMet); mRNA recruitment can occur at any time during PIC assembly.

The protein localises to the cytoplasm. Its function is as follows. One of the essential components for the initiation of protein synthesis. Stabilizes the binding of IF-2 and IF-3 on the 30S subunit to which N-formylmethionyl-tRNA(fMet) subsequently binds. Helps modulate mRNA selection, yielding the 30S pre-initiation complex (PIC). Upon addition of the 50S ribosomal subunit IF-1, IF-2 and IF-3 are released leaving the mature 70S translation initiation complex. The chain is Translation initiation factor IF-1 2 from Burkholderia cenocepacia (strain HI2424).